A 136-amino-acid chain; its full sequence is Histone H3.3C-like (136 aa).

Arg-3 carries the asymmetric dimethylarginine; by PRMT6; alternate modification. A Citrulline; alternate modification is found at Arg-3. Thr-4 carries the post-translational modification Phosphothreonine; by HASPIN. Lys-5 is subject to Allysine; alternate. Lys-5 is modified (N6,N6,N6-trimethyllysine; alternate). Lys-5 is modified (N6,N6-dimethyllysine; alternate). Lys-5 bears the N6-(2-hydroxyisobutyryl)lysine; alternate mark. Lys-5 is modified (N6-(beta-hydroxybutyryl)lysine; alternate). At Lys-5 the chain carries N6-acetyllysine; alternate. Position 5 is an N6-methyllysine; alternate (Lys-5). Position 7 is a phosphothreonine; by PKC (Thr-7). At Lys-10 the chain carries N6,N6,N6-trimethyllysine; alternate. N6,N6-dimethyllysine; alternate is present on Lys-10. An N6-(2-hydroxyisobutyryl)lysine; alternate modification is found at Lys-10. Lys-10 is subject to N6-acetyllysine; alternate. The residue at position 10 (Lys-10) is an N6-methyllysine; alternate. Ser-11 bears the ADP-ribosylserine; alternate mark. Residue Ser-11 is modified to Phosphoserine; alternate; by AURKB, AURKC, RPS6KA3, RPS6KA4 and RPS6KA5. Residue Thr-12 is modified to Phosphothreonine; by PKC. Position 15 is an N6-(2-hydroxyisobutyryl)lysine; alternate (Lys-15). Lys-15 bears the N6-(beta-hydroxybutyryl)lysine; alternate mark. Lys-15 is modified (N6-acetyllysine; alternate). Residue Lys-15 is modified to N6-glutaryllysine; alternate. At Lys-15 the chain carries N6-succinyllysine; alternate. Position 18 is a citrulline; alternate (Arg-18). Residue Arg-18 is modified to Asymmetric dimethylarginine; by CARM1; alternate. N6-(2-hydroxyisobutyryl)lysine; alternate occurs at positions 19 and 28. Position 19 is an N6-(beta-hydroxybutyryl)lysine; alternate (Lys-19). 2 positions are modified to N6-acetyllysine; alternate: Lys-19 and Lys-28. Residues Lys-19 and Lys-28 each carry the N6-methyllysine; alternate modification. Residues Lys-19 and Lys-28 each carry the N6-glutaryllysine; alternate modification. N6-butyryllysine; alternate is present on Lys-19. Lys-28 bears the N6,N6,N6-trimethyllysine; alternate mark. Lys-28 carries the post-translational modification N6,N6-dimethyllysine; alternate. The residue at position 29 (Ser-29) is an ADP-ribosylserine; alternate. Position 29 is a phosphoserine; alternate; by AURKB, AURKC and RPS6KA5 (Ser-29). A Phosphoserine modification is found at Ser-32. Lys-38 is modified (N6-methyllysine). The residue at position 42 (Tyr-42) is a Phosphotyrosine. Lys-57 carries the post-translational modification N6,N6,N6-trimethyllysine; alternate. Lys-57 is modified (N6-(2-hydroxyisobutyryl)lysine; alternate). Lys-57 bears the N6-(beta-hydroxybutyryl)lysine; alternate mark. At Lys-57 the chain carries N6-acetyllysine; alternate. Lys-57 carries the post-translational modification N6-glutaryllysine; alternate. Residue Lys-57 is modified to N6-succinyllysine; alternate. Lys-57 is subject to N6-methyllysine; by EHMT2; alternate. Residue Ser-58 is modified to Phosphoserine. An N6-(2-hydroxyisobutyryl)lysine; alternate mark is found at Lys-65 and Lys-80. N6-methyllysine; alternate occurs at positions 65 and 80. N6,N6,N6-trimethyllysine; alternate is present on Lys-80. Residue Lys-80 is modified to N6,N6-dimethyllysine; alternate. Residue Lys-80 is modified to N6-acetyllysine; alternate. Lys-80 bears the N6-glutaryllysine; alternate mark. An N6-succinyllysine; alternate modification is found at Lys-80. Thr-81 is modified (phosphothreonine). Ser-87 is modified (phosphoserine).

Belongs to the histone H3 family. In terms of assembly, the nucleosome is a histone octamer containing two molecules each of H2A, H2B, H3 and H4 assembled in one H3-H4 heterotetramer and two H2A-H2B heterodimers. The octamer wraps approximately 147 bp of DNA. Post-translationally, acetylation is generally linked to gene activation. Acetylation on Lys-19 favors methylation at Arg-18. Citrullination at Arg-18 by PADI4 impairs methylation and represses transcription. In terms of processing, asymmetric dimethylation at Arg-18 (H3R17me2a) by CARM1 is linked to gene activation. Asymmetric dimethylation at Arg-3 (H3R2me2a) by PRMT6 is linked to gene repression and is mutually exclusive with H3 Lys-5 methylation (H3K4me2 and H3K4me3). H3R2me2a is present at the 3' of genes regardless of their transcription state and is enriched on inactive promoters, while it is absent on active promoters. Post-translationally, methylation at Lys-5 (H3K4me) and Lys-80 (H3K79me) are linked to gene activation. Methylation at Lys-5 (H3K4me) facilitates subsequent acetylation of H3 and H4. Methylation at Lys-80 (H3K79me) is associated with DNA double-strand break (DSB) responses and is a specific target for TP53BP1. Methylation at Lys-10 (H3K9me) and Lys-28 (H3K27me) are linked to gene repression. Methylation at Lys-10 (H3K9me) is a specific target for HP1 proteins (CBX1, CBX3 and CBX5) and prevents subsequent phosphorylation at Ser-11 (H3S10ph) and acetylation of H3 and H4. Methylation at Lys-5 (H3K4me) and Lys-80 (H3K79me) require preliminary monoubiquitination of H2B at 'Lys-120'. Methylation at Lys-10 (H3K9me) and Lys-28 (H3K27me) are enriched in inactive X chromosome chromatin. Monomethylation at Lys-57 (H3K56me1) by EHMT2/G9A in G1 phase promotes interaction with PCNA and is required for DNA replication. Phosphorylated at Thr-4 (H3T3ph) by HASPIN during prophase and dephosphorylated during anaphase. Phosphorylation at Ser-11 (H3S10ph) by AURKB is crucial for chromosome condensation and cell-cycle progression during mitosis and meiosis. In addition phosphorylation at Ser-11 (H3S10ph) by RPS6KA4 and RPS6KA5 is important during interphase because it enables the transcription of genes following external stimulation, like mitogens, stress, growth factors or UV irradiation and result in the activation of genes, such as c-fos and c-jun. Phosphorylation at Ser-11 (H3S10ph), which is linked to gene activation, prevents methylation at Lys-10 (H3K9me) but facilitates acetylation of H3 and H4. Phosphorylation at Ser-11 (H3S10ph) by AURKB mediates the dissociation of HP1 proteins (CBX1, CBX3 and CBX5) from heterochromatin. Phosphorylation at Ser-11 (H3S10ph) is also an essential regulatory mechanism for neoplastic cell transformation. Phosphorylated at Ser-29 (H3S28ph) by MAP3K20 isoform 1, RPS6KA5 or AURKB during mitosis or upon ultraviolet B irradiation. Phosphorylation at Thr-7 (H3T6ph) by PRKCB is a specific tag for epigenetic transcriptional activation that prevents demethylation of Lys-5 (H3K4me) by LSD1/KDM1A. At centromeres, specifically phosphorylated at Thr-12 (H3T11ph) from prophase to early anaphase, by DAPK3 and PKN1. Phosphorylation at Thr-12 (H3T11ph) by PKN1 or isoform M2 of PKM (PKM2) is a specific tag for epigenetic transcriptional activation that promotes demethylation of Lys-10 (H3K9me) by KDM4C/JMJD2C. Phosphorylation at Tyr-42 (H3Y41ph) by JAK2 promotes exclusion of CBX5 (HP1 alpha) from chromatin. In terms of processing, lysine deamination at Lys-5 (H3K4all) to form allysine is mediated by LOXL2. Allysine formation by LOXL2 only takes place on H3K4me3 and results in gene repression. Post-translationally, butyrylation of histones marks active promoters and competes with histone acetylation. It is present during late spermatogenesis. Succinylation at Lys-80 (H3K79succ) by KAT2A takes place with a maximum frequency around the transcription start sites of genes. It gives a specific tag for epigenetic transcription activation. In terms of processing, serine ADP-ribosylation constitutes the primary form of ADP-ribosylation of proteins in response to DNA damage. Serine ADP-ribosylation at Ser-11 (H3S10ADPr) is mutually exclusive with phosphorylation at Ser-11 (H3S10ph) and impairs acetylation at Lys-10 (H3K9ac).

Its subcellular location is the nucleus. It is found in the chromosome. In terms of biological role, core component of nucleosome. Nucleosomes wrap and compact DNA into chromatin, limiting DNA accessibility to the cellular machineries which require DNA as a template. Histones thereby play a central role in transcription regulation, DNA repair, DNA replication and chromosomal stability. DNA accessibility is regulated via a complex set of post-translational modifications of histones, also called histone code, and nucleosome remodeling. The sequence is that of Histone H3.3C-like from Bos taurus (Bovine).